Reading from the N-terminus, the 556-residue chain is Putative protein SPATA31F2P (556 aa).

2 disordered regions span residues 133–154 (ALKA…SGSD) and 210–231 (LPKT…WVSP). Over residues 144-154 (SGGQDNDSGSD) the composition is skewed to polar residues.

Belongs to the SPATA31 family.

The chain is Putative protein SPATA31F2P from Homo sapiens (Human).